Consider the following 951-residue polypeptide: Serine/threonine-protein phosphatase 4 regulatory subunit 1 (951 aa).

HEAT repeat units lie at residues 26 to 63 (ESDVIIIPSALDFVSQDEMLTPLGRLDKYAASENVFNR), 82 to 119 (RDCIAVLERISRLADDSEPTVRAELMEQVPHIALFCQE), 127 to 164 (AFSKYLLPIVVRYLADQNNQVRKTSQAALLALLEQELI), 168 to 206 (DVETKVCPVLIDLTAPDSNDDVKTEAVAIMCKMAPMVGK), 208 to 246 (ITERLILPRFCEMCCDCRMFHVRKVCAANFGDICSVVGQ), 248 to 285 (ATEEMLLPRFFQLCSDNVWGVRKACAECFMAVSCATCQ), and 287 to 324 (IRRTKLSALFINLISDPSRWVRQAAFQSLGPFISTFAN). Disordered regions lie at residues 326-395 (SSSG…DMRV), 407-501 (SESP…MATR), 539-569 (HDEAGGAEQRSELQDDAVGAGGELPNCSISE), and 592-612 (GGADVGPGGGGGFSPDEERRP). Composition is skewed to basic and acidic residues over residues 332–360 (FKDESKSSEDKDRIRDDGVVQEEQSRPED), 464–483 (DLDKELQQDPGERPSPERTG), and 539–551 (HDEAGGAEQRSEL). An HEAT 8 repeat occupies 502-539 (KELEEMIENLEPHMDDPDVKAQVEVLSAALRASTLDAH). The span at 594–604 (ADVGPGGGGGF) shows a compositional bias: gly residues. 4 HEAT repeats span residues 699 to 735 (LTAADLVPIFNGFLKDLDEVRIGVLKHLHDFLKLLHI), 777 to 815 (RDVYDYLRPIALNLCADKVSSVRWISYKLVSEMVKKLHM), 820 to 858 (TFGVELINELVENFGRCPKWSGRQAFVFVCQTVIEDDCL), and 862 to 899 (QFAVHLMPHLLTLANDRVPNVRVLLAKTLRQTLLEKEY). A Phosphoserine modification is found at Ser-936.

In terms of assembly, serine/threonine-protein phosphatase 4 (PP4) occurs in different assemblies of the catalytic and one or more regulatory subunits. Component of the PP4 complex PPP4C-PPP4R1. Interacts with HDAC3.

In terms of biological role, regulatory subunit of serine/threonine-protein phosphatase 4. May play a role in regulation of cell division in renal glomeruli. The PPP4C-PPP4R1 PP4 complex may play a role in dephosphorylation and regulation of HDAC3. Plays a role in the inhibition of TNF-induced NF-kappa-B activation by regulating the dephosphorylation of TRAF2. In Rattus norvegicus (Rat), this protein is Serine/threonine-protein phosphatase 4 regulatory subunit 1 (Ppp4r1).